The chain runs to 131 residues: D-ribose pyranase (131 aa).

The Proton donor role is filled by His-20. Residues Asp-28, His-98, and 120–122 (YAN) each bind substrate.

Belongs to the RbsD / FucU family. RbsD subfamily. As to quaternary structure, homodecamer.

It localises to the cytoplasm. It carries out the reaction beta-D-ribopyranose = beta-D-ribofuranose. It participates in carbohydrate metabolism; D-ribose degradation; D-ribose 5-phosphate from beta-D-ribopyranose: step 1/2. Catalyzes the interconversion of beta-pyran and beta-furan forms of D-ribose. The sequence is that of D-ribose pyranase from Bacillus thuringiensis (strain Al Hakam).